The following is a 493-amino-acid chain: Glutamyl-tRNA(Gln) amidotransferase subunit A (493 aa).

Catalysis depends on charge relay system residues Lys81 and Ser156. Ser180 functions as the Acyl-ester intermediate in the catalytic mechanism.

This sequence belongs to the amidase family. GatA subfamily. Heterotrimer of A, B and C subunits.

The enzyme catalyses L-glutamyl-tRNA(Gln) + L-glutamine + ATP + H2O = L-glutaminyl-tRNA(Gln) + L-glutamate + ADP + phosphate + H(+). Functionally, allows the formation of correctly charged Gln-tRNA(Gln) through the transamidation of misacylated Glu-tRNA(Gln) in organisms which lack glutaminyl-tRNA synthetase. The reaction takes place in the presence of glutamine and ATP through an activated gamma-phospho-Glu-tRNA(Gln). In Mycobacterium ulcerans (strain Agy99), this protein is Glutamyl-tRNA(Gln) amidotransferase subunit A.